A 227-amino-acid chain; its full sequence is Lectin (227 aa).

The first 28 residues, 1 to 28, serve as a signal peptide directing secretion; the sequence is MTMTSTTTKAMAMAAAVLAAAAVAATNA. Glutamine 29 is modified (pyrrolidone carboxylic acid). Chitin-binding type-1 domains are found at residues 29 to 70, 71 to 113, 114 to 156, and 157 to 199; these read QTCG…ACCS, SQRC…PCRA, DIKC…ACCP, and EKRC…GCYK. Intrachain disulfides connect cysteine 31-cysteine 46, cysteine 40-cysteine 52, cysteine 45-cysteine 59, cysteine 63-cysteine 68, cysteine 74-cysteine 89, cysteine 83-cysteine 95, cysteine 88-cysteine 102, cysteine 106-cysteine 111, cysteine 117-cysteine 132, cysteine 126-cysteine 138, cysteine 131-cysteine 145, cysteine 149-cysteine 154, cysteine 160-cysteine 175, cysteine 169-cysteine 181, cysteine 174-cysteine 188, and cysteine 192-cysteine 197. Position 38–40 (38–40) interacts with substrate; that stretch reads MIC. Residue 90–101 participates in substrate binding; sequence SQYGYCGFGSEY. Residue 142–143 participates in substrate binding; it reads SE. The propeptide occupies 202–227; that stretch reads DGMAAILANNQSVSFEGIIESVAELV. A glycan (N-linked (GlcNAc...) asparagine) is linked at asparagine 211.

Functionally, N-acetyl-D-glucosamine binding lectin. In Oryza sativa subsp. indica (Rice), this protein is Lectin.